The following is a 76-amino-acid chain: MNVKSTVLDLISSQIYKPAEMIDPNSTLGDQGATFDLVEIKGKLDKKFGTNIPMSTMNGKISGIISEVEKSKKTIV.

This is an uncharacterized protein from Dictyostelium discoideum (Social amoeba).